The chain runs to 90 residues: Small ribosomal subunit protein uS15c (90 aa).

It belongs to the universal ribosomal protein uS15 family. Part of the 30S ribosomal subunit.

It localises to the plastid. Its subcellular location is the chloroplast. In Citrus sinensis (Sweet orange), this protein is Small ribosomal subunit protein uS15c (rps15).